A 166-amino-acid chain; its full sequence is UPF0304 protein VC_1871 (166 aa).

The protein belongs to the UPF0304 family.

In Vibrio cholerae serotype O1 (strain ATCC 39315 / El Tor Inaba N16961), this protein is UPF0304 protein VC_1871.